Consider the following 130-residue polypeptide: Small ribosomal subunit protein bS6 (130 aa).

A disordered region spans residues 100-130 (SPMVKAKDERRERREDFAEAGDDVEAGDSEE). The span at 104-116 (KAKDERRERREDF) shows a compositional bias: basic and acidic residues. Acidic residues predominate over residues 117 to 130 (AEAGDDVEAGDSEE).

It belongs to the bacterial ribosomal protein bS6 family.

Binds together with bS18 to 16S ribosomal RNA. The chain is Small ribosomal subunit protein bS6 from Pectobacterium atrosepticum (strain SCRI 1043 / ATCC BAA-672) (Erwinia carotovora subsp. atroseptica).